We begin with the raw amino-acid sequence, 432 residues long: Amino-acid acetyltransferase (432 aa).

An N-acetyltransferase domain is found at 286–425 (ERVREAAIED…ASLYNYQRNS (140 aa)).

This sequence belongs to the acetyltransferase family. ArgA subfamily.

The protein resides in the cytoplasm. The catalysed reaction is L-glutamate + acetyl-CoA = N-acetyl-L-glutamate + CoA + H(+). Its pathway is amino-acid biosynthesis; L-arginine biosynthesis; N(2)-acetyl-L-ornithine from L-glutamate: step 1/4. This chain is Amino-acid acetyltransferase, found in Pseudomonas fluorescens (strain ATCC BAA-477 / NRRL B-23932 / Pf-5).